The following is a 1529-amino-acid chain: Mediator of RNA polymerase II transcription subunit 1.1 (1529 aa).

3 disordered regions span residues 685–740 (PDAA…VVGE), 807–919 (QYRM…MRDN), and 933–1529 (PDIE…IDDE). Residues 693 to 702 (GKQRKPRAKK) are compositionally biased toward basic residues. Composition is skewed to low complexity over residues 722 to 739 (GAAAVGAGSGRKSSGVVG) and 807 to 828 (QYRMHMQQQQLQQQQMQSPQQQ). Residues 894–905 (TPSPLSAPPKPF) show a composition bias toward pro residues. Residues 908-919 (EQHHFGTKMRDN) show a composition bias toward basic and acidic residues. Low complexity-rich tracts occupy residues 958 to 990 (SSSSDPSTSGESSNATESASSAPLMKPPTTAQT) and 1008 to 1023 (QEQALQKQEQQRIQQQ). The stretch at 1008–1032 (QEQALQKQEQQRIQQQDSVDSTNSE) forms a coiled coil. Polar residues-rich tracts occupy residues 1051–1061 (NQVNRVMNMSN), 1068–1089 (GSSTNTSDIKPSLASLQKSTGS), and 1096–1105 (TPGTSSNIAQ). Basic and acidic residues-rich tracts occupy residues 1113–1130 (LKKEVEEQPPEREKEKLI), 1137–1185 (LKVD…ERDK), 1192–1240 (RDRT…KELS), and 1262–1278 (PKKDTVDEDKKEPKDES). Positions 1169–1202 (EKEDKSQREKDKKERDKERKRRDRDRTEAKKEKD) form a coiled coil. Over residues 1279–1288 (IPGPSTSSES) the composition is skewed to low complexity. Residues 1289–1304 (STRKEVAPAPISRKES) are compositionally biased toward basic and acidic residues. The span at 1349–1365 (SYSGSSNAGPISSSSRG) shows a compositional bias: low complexity. Composition is skewed to pro residues over residues 1375–1386 (PVLPPPALPMRG) and 1477–1500 (QPPPPPQMIPLPKENPPPPLAPPS).

This sequence belongs to the Mediator complex subunit 1 family. As to quaternary structure, component of the Mediator complex.

The protein localises to the nucleus. In terms of biological role, component of the Mediator complex, a coactivator involved in the regulated transcription of nearly all RNA polymerase II-dependent genes. Mediator functions as a bridge to convey information from gene-specific regulatory proteins to the basal RNA polymerase II transcription machinery. Mediator is recruited to promoters by direct interactions with regulatory proteins and serves as a scaffold for the assembly of a functional preinitiation complex with RNA polymerase II and the general transcription factors. This Caenorhabditis briggsae protein is Mediator of RNA polymerase II transcription subunit 1.1 (sop-3).